A 595-amino-acid polypeptide reads, in one-letter code: Trafficking protein particle complex subunit 14 (595 aa).

Disordered regions lie at residues 84-111 (ASVS…ECVE) and 494-513 (SNPP…SSPA).

As to quaternary structure, component of the multisubunit TRAPP II complex, which includes at least TRAPPC1, TRAPPC2, TRAPPC2L, TRAPPC3, TRAPPC4, TRAPPC5, TRAPPC6A/B, TRAPPC9, TRAPPC10 and TRAPPC14. TRAPPC9, TRAPPC10 and TRAPPC14 are specific subunits of the TRAPP II complex. Interacts with alpha-tubulin during mitosis.

The protein resides in the cytoplasm. Its subcellular location is the cytoskeleton. It is found in the spindle. The protein localises to the vesicle. It localises to the midbody. Functionally, specific subunit of the TRAPP (transport protein particle) II complex, a highly conserved vesicle tethering complex that functions in late Golgi trafficking as a membrane tether. TRAPP II complex also has GEF activity toward RAB1A. TRAPPC14 is required for ciliogenesis. In Danio rerio (Zebrafish), this protein is Trafficking protein particle complex subunit 14 (trappc14).